The following is a 293-amino-acid chain: Diaminopimelate epimerase (293 aa).

Residues N17, Q47, and N67 each coordinate substrate. C76 acts as the Proton donor in catalysis. Substrate contacts are provided by residues 77–78 (GN), N164, N197, and 215–216 (ER). The active-site Proton acceptor is the C224. Residue 225-226 (GS) coordinates substrate.

Belongs to the diaminopimelate epimerase family. Homodimer.

The protein resides in the cytoplasm. It catalyses the reaction (2S,6S)-2,6-diaminopimelate = meso-2,6-diaminopimelate. It functions in the pathway amino-acid biosynthesis; L-lysine biosynthesis via DAP pathway; DL-2,6-diaminopimelate from LL-2,6-diaminopimelate: step 1/1. In terms of biological role, catalyzes the stereoinversion of LL-2,6-diaminopimelate (L,L-DAP) to meso-diaminopimelate (meso-DAP), a precursor of L-lysine and an essential component of the bacterial peptidoglycan. This Rhodopseudomonas palustris (strain TIE-1) protein is Diaminopimelate epimerase.